The primary structure comprises 195 residues: Peptidyl-tRNA hydrolase (195 aa).

Tyrosine 17 is a tRNA binding site. The Proton acceptor role is filled by histidine 22. Residues tyrosine 68, asparagine 70, and asparagine 116 each contribute to the tRNA site.

It belongs to the PTH family. In terms of assembly, monomer.

The protein localises to the cytoplasm. It carries out the reaction an N-acyl-L-alpha-aminoacyl-tRNA + H2O = an N-acyl-L-amino acid + a tRNA + H(+). Hydrolyzes ribosome-free peptidyl-tRNAs (with 1 or more amino acids incorporated), which drop off the ribosome during protein synthesis, or as a result of ribosome stalling. In terms of biological role, catalyzes the release of premature peptidyl moieties from peptidyl-tRNA molecules trapped in stalled 50S ribosomal subunits, and thus maintains levels of free tRNAs and 50S ribosomes. The protein is Peptidyl-tRNA hydrolase of Shewanella sp. (strain ANA-3).